Consider the following 416-residue polypeptide: Gamma-glutamyl phosphate reductase (416 aa).

The protein belongs to the gamma-glutamyl phosphate reductase family.

The protein localises to the cytoplasm. It carries out the reaction L-glutamate 5-semialdehyde + phosphate + NADP(+) = L-glutamyl 5-phosphate + NADPH + H(+). Its pathway is amino-acid biosynthesis; L-proline biosynthesis; L-glutamate 5-semialdehyde from L-glutamate: step 2/2. Its function is as follows. Catalyzes the NADPH-dependent reduction of L-glutamate 5-phosphate into L-glutamate 5-semialdehyde and phosphate. The product spontaneously undergoes cyclization to form 1-pyrroline-5-carboxylate. The protein is Gamma-glutamyl phosphate reductase of Actinobacillus succinogenes (strain ATCC 55618 / DSM 22257 / CCUG 43843 / 130Z).